We begin with the raw amino-acid sequence, 26 residues long: Mitochondrial import receptor subunit TOM7-2 (26 aa).

It belongs to the Tom7 family. In terms of assembly, forms part of the preprotein translocase complex of the outer mitochondrial membrane (TOM complex).

It is found in the mitochondrion outer membrane. Seems to act as a modulator of the dynamics of the mitochondrial protein transport machinery. Seems to promote the dissociation of subunits of the outer membrane translocase. This is Mitochondrial import receptor subunit TOM7-2 (TOM7-2) from Solanum tuberosum (Potato).